We begin with the raw amino-acid sequence, 458 residues long: Paired box protein Pax-8 (458 aa).

Residues glycine 18–lysine 144 constitute a DNA-binding region (paired). A PAI subdomain region spans residues glycine 21–threonine 77. Residues lysine 96–lysine 144 are RED subdomain. Residues proline 198 to serine 217 are disordered.

The protein localises to the nucleus. Probable transcription factor. Involved in kidney development, acting synergistically with lhx1/lim-1 to establish the pronephric primordium in late gastrulae/early neurulae. This Xenopus tropicalis (Western clawed frog) protein is Paired box protein Pax-8.